The sequence spans 900 residues: Alanine--tRNA ligase (900 aa).

H604, H608, C708, and H712 together coordinate Zn(2+).

Belongs to the class-II aminoacyl-tRNA synthetase family. Requires Zn(2+) as cofactor.

The protein resides in the cytoplasm. The catalysed reaction is tRNA(Ala) + L-alanine + ATP = L-alanyl-tRNA(Ala) + AMP + diphosphate. Functionally, catalyzes the attachment of alanine to tRNA(Ala) in a two-step reaction: alanine is first activated by ATP to form Ala-AMP and then transferred to the acceptor end of tRNA(Ala). Also edits incorrectly charged Ser-tRNA(Ala) and Gly-tRNA(Ala) via its editing domain. The polypeptide is Alanine--tRNA ligase (Saccharolobus islandicus (strain M.14.25 / Kamchatka #1) (Sulfolobus islandicus)).